Reading from the N-terminus, the 374-residue chain is Queuine tRNA-ribosyltransferase (374 aa).

Catalysis depends on D89, which acts as the Proton acceptor. Substrate contacts are provided by residues 89–93, D143, Q187, and G214; that span reads DSGGF. The tract at residues 245–251 is RNA binding; that stretch reads GVGKPED. D264 (nucleophile) is an active-site residue. An RNA binding; important for wobble base 34 recognition region spans residues 269–273; that stretch reads TRNAR. The Zn(2+) site is built by C302, C304, C307, and H333.

This sequence belongs to the queuine tRNA-ribosyltransferase family. Homodimer. Within each dimer, one monomer is responsible for RNA recognition and catalysis, while the other monomer binds to the replacement base PreQ1. Requires Zn(2+) as cofactor.

It catalyses the reaction 7-aminomethyl-7-carbaguanine + guanosine(34) in tRNA = 7-aminomethyl-7-carbaguanosine(34) in tRNA + guanine. The protein operates within tRNA modification; tRNA-queuosine biosynthesis. Catalyzes the base-exchange of a guanine (G) residue with the queuine precursor 7-aminomethyl-7-deazaguanine (PreQ1) at position 34 (anticodon wobble position) in tRNAs with GU(N) anticodons (tRNA-Asp, -Asn, -His and -Tyr). Catalysis occurs through a double-displacement mechanism. The nucleophile active site attacks the C1' of nucleotide 34 to detach the guanine base from the RNA, forming a covalent enzyme-RNA intermediate. The proton acceptor active site deprotonates the incoming PreQ1, allowing a nucleophilic attack on the C1' of the ribose to form the product. After dissociation, two additional enzymatic reactions on the tRNA convert PreQ1 to queuine (Q), resulting in the hypermodified nucleoside queuosine (7-(((4,5-cis-dihydroxy-2-cyclopenten-1-yl)amino)methyl)-7-deazaguanosine). The sequence is that of Queuine tRNA-ribosyltransferase from Psychromonas ingrahamii (strain DSM 17664 / CCUG 51855 / 37).